Reading from the N-terminus, the 233-residue chain is Phosphoribosylformylglycinamidine synthase subunit PurQ (233 aa).

Positions 9–233 (RIGIVTFPGS…LSGFLSAFSS (225 aa)) constitute a Glutamine amidotransferase type-1 domain. The Nucleophile role is filled by Cys-92. Residues His-201 and Glu-203 contribute to the active site.

As to quaternary structure, part of the FGAM synthase complex composed of 1 PurL, 1 PurQ and 2 PurS subunits.

It localises to the cytoplasm. The enzyme catalyses N(2)-formyl-N(1)-(5-phospho-beta-D-ribosyl)glycinamide + L-glutamine + ATP + H2O = 2-formamido-N(1)-(5-O-phospho-beta-D-ribosyl)acetamidine + L-glutamate + ADP + phosphate + H(+). It catalyses the reaction L-glutamine + H2O = L-glutamate + NH4(+). It functions in the pathway purine metabolism; IMP biosynthesis via de novo pathway; 5-amino-1-(5-phospho-D-ribosyl)imidazole from N(2)-formyl-N(1)-(5-phospho-D-ribosyl)glycinamide: step 1/2. Part of the phosphoribosylformylglycinamidine synthase complex involved in the purines biosynthetic pathway. Catalyzes the ATP-dependent conversion of formylglycinamide ribonucleotide (FGAR) and glutamine to yield formylglycinamidine ribonucleotide (FGAM) and glutamate. The FGAM synthase complex is composed of three subunits. PurQ produces an ammonia molecule by converting glutamine to glutamate. PurL transfers the ammonia molecule to FGAR to form FGAM in an ATP-dependent manner. PurS interacts with PurQ and PurL and is thought to assist in the transfer of the ammonia molecule from PurQ to PurL. This chain is Phosphoribosylformylglycinamidine synthase subunit PurQ, found in Frankia casuarinae (strain DSM 45818 / CECT 9043 / HFP020203 / CcI3).